The sequence spans 508 residues: Light-independent protochlorophyllide reductase subunit B (508 aa).

[4Fe-4S] cluster is bound at residue Asp36. Asp282 functions as the Proton donor in the catalytic mechanism. 417–418 (GL) contributes to the substrate binding site.

This sequence belongs to the ChlB/BchB/BchZ family. In terms of assembly, protochlorophyllide reductase is composed of three subunits; BchL, BchN and BchB. Forms a heterotetramer of two BchB and two BchN subunits. [4Fe-4S] cluster serves as cofactor.

The catalysed reaction is chlorophyllide a + oxidized 2[4Fe-4S]-[ferredoxin] + 2 ADP + 2 phosphate = protochlorophyllide a + reduced 2[4Fe-4S]-[ferredoxin] + 2 ATP + 2 H2O. Its pathway is porphyrin-containing compound metabolism; bacteriochlorophyll biosynthesis (light-independent). In terms of biological role, component of the dark-operative protochlorophyllide reductase (DPOR) that uses Mg-ATP and reduced ferredoxin to reduce ring D of protochlorophyllide (Pchlide) to form chlorophyllide a (Chlide). This reaction is light-independent. The NB-protein (BchN-BchB) is the catalytic component of the complex. This Methylocella silvestris (strain DSM 15510 / CIP 108128 / LMG 27833 / NCIMB 13906 / BL2) protein is Light-independent protochlorophyllide reductase subunit B.